Reading from the N-terminus, the 177-residue chain is FANCD2 opposite strand protein (177 aa).

The sequence is that of FANCD2 opposite strand protein (FANCD2OS) from Homo sapiens (Human).